The following is a 1407-amino-acid chain: E3 ubiquitin-protein ligase linker protein MMS1 (1407 aa).

Positions M1–I600 are required for interaction with MMS22. Phosphothreonine is present on T1294.

In terms of assembly, component of multiple cullin-RING ligases (CRLs) composed of 4 subunits: the RING protein HRT1, the cullin RTT101, a linker protein MMS1, and one of many alternative substrate receptors belonging to a protein family described as DCAF (DDB1- and CUL4-associated factor). Component of a RTT101(MMS1-MMS22) complex with the substrate receptor MMS22. This complex further interacts with RTT107 and CTF4 to form RTT101-MMS1-MMS22-RTT107 and RTT101-MMS1-MMS22-CTF4 complexes respectively. Component of a RTT101(MSS1-CRT10) complex with the substrate receptor CRT10. Component of a RTT101(MSS1-ESC2) complex with the potential substrate receptor ESC2. Component of a RTT101(MSS1-ORC5) complex with the potential substrate receptor ORC5. Interacts with RTT101 (via N-ter). Interacts (via N-ter) with MMS22 (via C-ter). Interacts with CRT10.

It localises to the nucleus. Its function is as follows. Component of multiple cullin-RING-based E3 ubiquitin-protein ligase complexes (CRLs), which mediate the ubiquitination of target proteins. The CRL associates with CDC34 as the E2 ubiquitin-conjugating enzyme. The functional specificity of the CRL depends on the type of the associated substrate receptor protein. RTT101(MMS1-MMS22) promotes fork progression through damaged DNA or natural pause sites by stabilizing replication proteins like the replication fork-pausing complex (FPC) and leading-strand polymerase at stalled replication forks. RTT101(MMS1-MMS22) ubiquitinates the acetylated histones H3K56ac-H4 at lysine residues H3K121, H3K122 and H3K125. Ubiquitination is required for efficient histone deposition during replication-coupled nucleosome assembly, probably by facilitating the transfer of H3-H4 from ASF1 to other chaperones involved in histone deposition. RTT101(MMS1-CRT10) may regulate nucleotide synthesis through transcriptional regulation of ribonucleotide reductase. RTT101(MMS1) is also involved in the non-functional rRNA decay (NRD) of 25S rRNA through the selective, ubiquitination-dependent degradation of nonfunctional ribosomal particles. Involved in the regulation of TY1 transposition. The polypeptide is E3 ubiquitin-protein ligase linker protein MMS1 (MMS1) (Saccharomyces cerevisiae (strain ATCC 204508 / S288c) (Baker's yeast)).